We begin with the raw amino-acid sequence, 89 residues long: Small ribosomal subunit protein uS15 (89 aa).

Belongs to the universal ribosomal protein uS15 family. In terms of assembly, part of the 30S ribosomal subunit. Forms a bridge to the 50S subunit in the 70S ribosome, contacting the 23S rRNA.

One of the primary rRNA binding proteins, it binds directly to 16S rRNA where it helps nucleate assembly of the platform of the 30S subunit by binding and bridging several RNA helices of the 16S rRNA. In terms of biological role, forms an intersubunit bridge (bridge B4) with the 23S rRNA of the 50S subunit in the ribosome. In Listeria innocua serovar 6a (strain ATCC BAA-680 / CLIP 11262), this protein is Small ribosomal subunit protein uS15.